The chain runs to 646 residues: Threonine--tRNA ligase (646 aa).

One can recognise a TGS domain in the interval 1-63 (MAQISLTFPD…ETDAKIAIHT (63 aa)). The segment at 247-544 (DHRKLGREME…LIENYAGKLP (298 aa)) is catalytic. Zn(2+) is bound by residues C344, H395, and H521.

Belongs to the class-II aminoacyl-tRNA synthetase family. As to quaternary structure, homodimer. Zn(2+) is required as a cofactor.

It localises to the cytoplasm. It catalyses the reaction tRNA(Thr) + L-threonine + ATP = L-threonyl-tRNA(Thr) + AMP + diphosphate + H(+). Catalyzes the attachment of threonine to tRNA(Thr) in a two-step reaction: L-threonine is first activated by ATP to form Thr-AMP and then transferred to the acceptor end of tRNA(Thr). Also edits incorrectly charged L-seryl-tRNA(Thr). The polypeptide is Threonine--tRNA ligase (Cereibacter sphaeroides (strain ATCC 17029 / ATH 2.4.9) (Rhodobacter sphaeroides)).